The chain runs to 198 residues: MSAENKIEEITEDQVPQIEENSTIVIKKEEKAARALISKLNLQKVEGITRVVLKRTRQHIFVIANPEVYKTPTGNSYVVFGEAQHEDMQATARAAQIAAAQAQQAAAETGSVSEAAAAGEVGAELASKDPASITADLEAASLSKDEDAEDEAEADATGLEDSDIKLVMEQANVSRNKAINGLKKNDSDVVNTIMDLCK.

The 66-residue stretch at 48-113 folds into the NAC-A/B domain; the sequence is ITRVVLKRTR…QAAAETGSVS (66 aa). A UBA domain is found at 159–198; sequence LEDSDIKLVMEQANVSRNKAINGLKKNDSDVVNTIMDLCK.

It belongs to the NAC-alpha family. Part of the nascent polypeptide-associated complex (NAC), consisting of EGD2 and EGD1. NAC associates with ribosomes via EGD1.

The protein resides in the cytoplasm. Its subcellular location is the nucleus. Functionally, component of the nascent polypeptide-associated complex (NAC), a dynamic component of the ribosomal exit tunnel, protecting the emerging polypeptides from interaction with other cytoplasmic proteins to ensure appropriate nascent protein targeting. The NAC complex also promotes mitochondrial protein import by enhancing productive ribosome interactions with the outer mitochondrial membrane and blocks the inappropriate interaction of ribosomes translating non-secretory nascent polypeptides with translocation sites in the membrane of the endoplasmic reticulum. EGD2 may also be involved in transcription regulation. The chain is Nascent polypeptide-associated complex subunit alpha (EGD2) from Yarrowia lipolytica (strain CLIB 122 / E 150) (Yeast).